The chain runs to 146 residues: Large ribosomal subunit protein uL15 (146 aa).

The segment covering 1–13 has biased composition (basic and acidic residues); the sequence is MKLHELRPAEGSK. The disordered stretch occupies residues 1 to 54; that stretch reads MKLHELRPAEGSKKAPKRVGRGNGSGLGKTAGKGHKGQNARSGGGVRPGFEGGQ. Composition is skewed to gly residues over residues 21-31 and 42-52; these read RGNGSGLGKTA and SGGGVRPGFEG.

Belongs to the universal ribosomal protein uL15 family. As to quaternary structure, part of the 50S ribosomal subunit.

Functionally, binds to the 23S rRNA. In Clostridium novyi (strain NT), this protein is Large ribosomal subunit protein uL15.